Here is a 452-residue protein sequence, read N- to C-terminus: Trigger factor (452 aa).

The PPIase FKBP-type domain occupies G171–K256.

The protein belongs to the FKBP-type PPIase family. Tig subfamily.

It localises to the cytoplasm. It catalyses the reaction [protein]-peptidylproline (omega=180) = [protein]-peptidylproline (omega=0). Involved in protein export. Acts as a chaperone by maintaining the newly synthesized protein in an open conformation. Functions as a peptidyl-prolyl cis-trans isomerase. The chain is Trigger factor from Bradyrhizobium sp. (strain BTAi1 / ATCC BAA-1182).